The primary structure comprises 236 residues: Osmoprotectant import permease protein OsmY (236 aa).

6 helical membrane passes run 9–29 (VLGF…GIGL), 47–67 (LMLV…SGIL), 95–115 (VLAL…VALF), 126–146 (TYAG…GIGM), 180–200 (PLAF…GIYL), and 207–227 (ILGA…LAWF). In terms of domain architecture, ABC transmembrane type-1 spans 43 to 224 (GQRHLMLVFT…LFALILDTLL (182 aa)).

The protein belongs to the binding-protein-dependent transport system permease family. In terms of assembly, the complex is composed of two ATP-binding proteins (OsmV), two transmembrane proteins (OsmW and OsmY) and a solute-binding protein (OsmX).

It localises to the cell inner membrane. Part of the OsmU ABC transporter complex, which is involved in the uptake of osmoprotectants such as choline-O-sulfate and glycine betaine. Probably responsible for the translocation of the substrate across the membrane. The sequence is that of Osmoprotectant import permease protein OsmY (osmY) from Salmonella typhimurium (strain LT2 / SGSC1412 / ATCC 700720).